Here is a 95-residue protein sequence, read N- to C-terminus: Exodeoxyribonuclease 7 small subunit (95 aa).

The protein belongs to the XseB family. Heterooligomer composed of large and small subunits.

The protein localises to the cytoplasm. It carries out the reaction Exonucleolytic cleavage in either 5'- to 3'- or 3'- to 5'-direction to yield nucleoside 5'-phosphates.. Functionally, bidirectionally degrades single-stranded DNA into large acid-insoluble oligonucleotides, which are then degraded further into small acid-soluble oligonucleotides. The protein is Exodeoxyribonuclease 7 small subunit of Corynebacterium aurimucosum (strain ATCC 700975 / DSM 44827 / CIP 107346 / CN-1) (Corynebacterium nigricans).